Reading from the N-terminus, the 128-residue chain is D-ribose pyranase (128 aa).

The Proton donor role is filled by His-20. Substrate-binding positions include Asp-28, His-95, and 117–119; that span reads YSN.

This sequence belongs to the RbsD / FucU family. RbsD subfamily. As to quaternary structure, homodecamer.

The protein localises to the cytoplasm. It catalyses the reaction beta-D-ribopyranose = beta-D-ribofuranose. The protein operates within carbohydrate metabolism; D-ribose degradation; D-ribose 5-phosphate from beta-D-ribopyranose: step 1/2. Functionally, catalyzes the interconversion of beta-pyran and beta-furan forms of D-ribose. The sequence is that of D-ribose pyranase from Thermosipho africanus (strain TCF52B).